The following is a 203-amino-acid chain: Histidine biosynthesis bifunctional protein HisIE (203 aa).

The phosphoribosyl-AMP cyclohydrolase stretch occupies residues 1-114; the sequence is MLTEQQRREL…FGDTAHQWLF (114 aa). The tract at residues 115–203 is phosphoribosyl-ATP pyrophosphohydrolase; that stretch reads LYQLEQLLAE…VIENLRKRHQ (89 aa).

The protein in the N-terminal section; belongs to the PRA-CH family. In the C-terminal section; belongs to the PRA-PH family.

Its subcellular location is the cytoplasm. The catalysed reaction is 1-(5-phospho-beta-D-ribosyl)-ATP + H2O = 1-(5-phospho-beta-D-ribosyl)-5'-AMP + diphosphate + H(+). It catalyses the reaction 1-(5-phospho-beta-D-ribosyl)-5'-AMP + H2O = 1-(5-phospho-beta-D-ribosyl)-5-[(5-phospho-beta-D-ribosylamino)methylideneamino]imidazole-4-carboxamide. Its pathway is amino-acid biosynthesis; L-histidine biosynthesis; L-histidine from 5-phospho-alpha-D-ribose 1-diphosphate: step 2/9. It functions in the pathway amino-acid biosynthesis; L-histidine biosynthesis; L-histidine from 5-phospho-alpha-D-ribose 1-diphosphate: step 3/9. The sequence is that of Histidine biosynthesis bifunctional protein HisIE from Escherichia coli O6:H1 (strain CFT073 / ATCC 700928 / UPEC).